Consider the following 163-residue polypeptide: Sperm surface protein Sp17 (163 aa).

2 disordered regions span residues 57 to 115 (PAEW…EKEE) and 129 to 163 (VARE…THEK). Composition is skewed to basic and acidic residues over residues 62-98 (SKVE…KEEE) and 129-139 (VAREEVKKMKT). In terms of domain architecture, IQ spans 114–143 (EEVAAVKIQAAFRGHVAREEVKKMKTDSLQ). Residues 153-163 (DTGFTSRTHEK) show a composition bias toward polar residues.

As to quaternary structure, homodimer. May interact with ROPN1. Testis- and sperm-specific.

Its subcellular location is the membrane. Functionally, sperm surface zona pellucida binding protein. Helps to bind spermatozoa to the zona pellucida with high affinity. Might function in binding zona pellucida and carbohydrates. This chain is Sperm surface protein Sp17 (SPA17), found in Papio hamadryas (Hamadryas baboon).